The sequence spans 334 residues: snRNA-activating protein complex subunit 2 (334 aa).

Disordered stretches follow at residues 137 to 200 (LHSK…STEE) and 271 to 306 (AGGS…ELKS). Residues 167-180 (IPSSAPAAPSSAPR) show a composition bias toward low complexity.

As to quaternary structure, part of the SNAPc complex composed of 5 subunits: SNAPC1, SNAPC2, SNAPC3, SNAPC4 and SNAPC5. SNAPC2 interacts with TBP and SNAPC4.

Its subcellular location is the nucleus. Part of the SNAPc complex required for the transcription of both RNA polymerase II and III small-nuclear RNA genes. Binds to the proximal sequence element (PSE), a non-TATA-box basal promoter element common to these 2 types of genes. Recruits TBP and BRF2 to the U6 snRNA TATA box. The polypeptide is snRNA-activating protein complex subunit 2 (SNAPC2) (Homo sapiens (Human)).